A 188-amino-acid chain; its full sequence is MKFSLFALLFVVVSCVDVGTQTRDAFILAHKQPLSTYAVENMDFVLEYGLYNVGDKPAQKVTIDDRHSFPTNSFDIVKGLLFVHFEQIPAGSNVTHSVVIRPRAFGFFNYTAAQVTYYTDNENHHVTLTNTPGEGYIYRQREYDRRFAPKYTYFLVFFLIVAPTTLGSFLLFQQSKARFPNVIKKKST.

The N-terminal stretch at 1–15 (MKFSLFALLFVVVSC) is a signal peptide. Residues 16–151 (VDVGTQTRDA…EYDRRFAPKY (136 aa)) lie on the Lumenal side of the membrane. N-linked (GlcNAc...) asparagine glycans are attached at residues asparagine 93 and asparagine 109. Residues 152–172 (TYFLVFFLIVAPTTLGSFLLF) form a helical membrane-spanning segment. The Cytoplasmic segment spans residues 173 to 188 (QQSKARFPNVIKKKST).

This sequence belongs to the TRAP-beta family. As to quaternary structure, heterotetramer of TRAP-alpha, TRAP-beta, TRAP-delta and TRAP-gamma.

The protein resides in the endoplasmic reticulum membrane. TRAP proteins are part of a complex whose function is to bind calcium to the ER membrane and thereby regulate the retention of ER resident proteins. This is Translocon-associated protein subunit beta from Caenorhabditis elegans.